The sequence spans 2381 residues: Highly reducing polyketide synthase virA (2381 aa).

The Ketosynthase family 3 (KS3) domain occupies 1 to 420 (MDALHLACHL…GANGHVILES (420 aa)). Catalysis depends on for beta-ketoacyl synthase activity residues Cys171, His306, and His344. Positions 535-851 (VFTGQGAQYA…PYSPTLVRKE (317 aa)) are malonyl-CoA:ACP transacylase (MAT) domain. The For malonyltransferase activity role is filled by Ser629. Positions 920–1064 (HELLGTRATA…GSIRVMESTL (145 aa)) are N-terminal hotdog fold. The dehydratase (DH) domain stretch occupies residues 920-1232 (HELLGTRATA…HLRMNEYTGK (313 aa)). The 316-residue stretch at 920–1235 (HELLGTRATA…MNEYTGKAPV (316 aa)) folds into the PKS/mFAS DH domain. The active-site Proton acceptor; for dehydratase activity is the His952. The C-terminal hotdog fold stretch occupies residues 1078–1235 (HEVWGMSRWY…MNEYTGKAPV (158 aa)). Asp1144 acts as the Proton donor; for dehydratase activity in catalysis. Positions 1639-1956 (GMTDTIHFQQ…NKDRVGKVVV (318 aa)) are enoyl reductase (ER) domain. The ketoreductase (KR) domain stretch occupies residues 1981 to 2159 (TYLLVGCLGG…AVSVGLGMIS (179 aa)). Residues 2297 to 2375 (TMLDAILRLT…TLAEFIEEKL (79 aa)) enclose the Carrier domain. Ser2334 is subject to O-(pantetheine 4'-phosphoryl)serine.

It functions in the pathway secondary metabolite biosynthesis. Functionally, highly reducing polyketide synthase; part of the gene cluster that mediates the biosynthesis of virensols and trichoxide, fungal natural products that contain or are derived from a salicylaldehyde core. The pathway begins with the synthesis of the reduced chain in virensol C by the highly reducing polyketide synthase virA via condensation of one acetate and 8 malonate units. VirA has interesting programming rules since the first 2 ketides are fully reduced, the 3 following ketides undergo beta-dehydration, and the last 3 ketides are only reduced to beta-hydroxys to yield the trihydroxy portion. The production of aldehyde virensol C by virA alone is surprising, since virA does not contain a reductase (R) domain that is typically associated with reductive product release in HRPKS. The cupin-domain enzyme virC is involved in enhancing virA product turnover. The short-chain dehydrogenase virB then oxidizes the C-7 alcohol of virensol C to a ketone, yielding virensol D. Virensol D is further transformed to salicylaldehyde 5-deoxyaurocitrin by the short-chain dehydrogenase virD. VirD catalyzes the dehydrogenation of C-3 to form the beta-ketone aldehyde, which is followed by the generation of the nucleophilic C-2 that is required for the intramolecular aldol condensation between C-2 and C-7, itself followed by dehydration and aromatization which leads to salicylaldehyde 5-deoxyaurocitrin. While the dehydrogenation of virensol D is definitely catalyzed by virD, the aldol condensation and dehydration may be uncatalyzed or assisted by virD. The short chain dehydrogenase virG then converts salicylaldehyde 5-deoxyaurocitrin into virensol B which is further hydroxylated by the cytochrome P450 monooxygenase virE to yield the hydroquinone virensol A. VirI then may oxidize virensol A to form the quinone, while virH performs the epoxidation. Finally, the two remaining short-chain dehydrogenases, virK and virL, are probably responsible for reducing the ketones to the corresponding alcohols to furnish the epoxycyclohexanol structure in trichoxide. This Hypocrea virens (strain Gv29-8 / FGSC 10586) (Gliocladium virens) protein is Highly reducing polyketide synthase virA.